A 180-amino-acid chain; its full sequence is Ribosome maturation factor RimM (180 aa).

One can recognise a PRC barrel domain in the interval 97–169 (PGELSWDFFV…IITVDLPEGL (73 aa)).

Belongs to the RimM family. Binds ribosomal protein uS19.

It localises to the cytoplasm. Functionally, an accessory protein needed during the final step in the assembly of 30S ribosomal subunit, possibly for assembly of the head region. Essential for efficient processing of 16S rRNA. May be needed both before and after RbfA during the maturation of 16S rRNA. It has affinity for free ribosomal 30S subunits but not for 70S ribosomes. This is Ribosome maturation factor RimM from Bacteroides fragilis (strain YCH46).